The sequence spans 548 residues: Probable sucrose-6-phosphate hydrolase (548 aa).

Substrate contacts are provided by residues 105–108 (LLND), Q124, 167–168 (FS), 228–229 (RD), and E283. D108 is a catalytic residue.

It belongs to the glycosyl hydrolase 32 family.

It localises to the cytoplasm. The catalysed reaction is Hydrolysis of terminal non-reducing beta-D-fructofuranoside residues in beta-D-fructofuranosides.. The protein operates within glycan biosynthesis; sucrose metabolism. Enables the bacterium to metabolize sucrose as a sole carbon source. The chain is Probable sucrose-6-phosphate hydrolase from Vibrio cholerae serotype O1 (strain ATCC 39315 / El Tor Inaba N16961).